The following is a 204-amino-acid chain: Lymphotoxin-alpha (204 aa).

The signal sequence occupies residues 1–33 (MTPPGRLYLLRVCSTPPLLLLGLLLALPLEAQG). In terms of domain architecture, THD spans 62 to 204 (PAAHLVGDPS…SSVFFGAFAL (143 aa)). Residue Asn95 is glycosylated (N-linked (GlcNAc...) asparagine). Residues Cys119 and Cys155 are joined by a disulfide bond.

It belongs to the tumor necrosis factor family. In terms of assembly, homotrimer, and heterotrimer of either two LTB and one LTA subunits or (less prevalent) two LTA and one LTB subunits. Interacts with TNFRSF14.

The protein localises to the secreted. The protein resides in the membrane. Its function is as follows. Cytokine that in its homotrimeric form binds to TNFRSF1A/TNFR1, TNFRSF1B/TNFBR and TNFRSF14/HVEM. In its heterotrimeric form with LTB binds to TNFRSF3/LTBR. Lymphotoxin is produced by lymphocytes and is cytotoxic for a wide range of tumor cells in vitro and in vivo. This Bos taurus (Bovine) protein is Lymphotoxin-alpha (LTA).